The primary structure comprises 133 residues: Interleukin-4 (133 aa).

Residues 1–24 (MGLTSQLIPTLVCLLVCTSNFAHG) form the signal peptide. 3 disulfide bridges follow: Cys27-Cys133, Cys48-Cys85, and Cys70-Cys105. Residues Asn62, Asn96, Asn102, and Asn108 are each glycosylated (N-linked (GlcNAc...) asparagine).

The protein belongs to the IL-4/IL-13 family.

The protein localises to the secreted. In terms of biological role, participates in at least several B-cell activation processes as well as of other cell types. It is a costimulator of DNA-synthesis. It induces the expression of class II MHC molecules on resting B-cells. It enhances both secretion and cell surface expression of IgE and IgG1. It also regulates the expression of the low affinity Fc receptor for IgE (CD23) on both lymphocytes and monocytes. Positively regulates IL31RA expression in macrophages. Stimulates autophagy in dendritic cells by interfering with mTORC1 signaling and through the induction of RUFY4. This chain is Interleukin-4 (IL4), found in Lama glama (Llama).